The chain runs to 185 residues: Virulence membrane protein PagC (185 aa).

The first 23 residues, 1-23 (MKNIILSTLVITTSVLVVNVAQA), serve as a signal peptide directing secretion.

Belongs to the outer membrane OOP (TC 1.B.6) superfamily. Ail family.

It is found in the cell outer membrane. Its function is as follows. Essential for full virulence and survival within macrophages. In Salmonella typhimurium (strain LT2 / SGSC1412 / ATCC 700720), this protein is Virulence membrane protein PagC (pagC).